Reading from the N-terminus, the 254-residue chain is Alcohol dehydrogenase (254 aa).

9–32 lines the NAD(+) pocket; sequence IFVAGLGGIGLDTSRELVKRDLKN. Ser138 contacts substrate. The active-site Proton acceptor is Tyr151.

Belongs to the short-chain dehydrogenases/reductases (SDR) family. In terms of assembly, homodimer.

The enzyme catalyses a primary alcohol + NAD(+) = an aldehyde + NADH + H(+). It carries out the reaction a secondary alcohol + NAD(+) = a ketone + NADH + H(+). This chain is Alcohol dehydrogenase (Adh), found in Drosophila paulistorum (Fruit fly).